The following is a 468-amino-acid chain: ERO1-like protein alpha (468 aa).

The signal sequence occupies residues 1 to 23 (MGRGWGFLFGLLGAVWLLSSGHG). Cystine bridges form between C35–C48, C37–C46, C85–C391, C94–C99, C94–C131, C99–C104, C208–C241, and C394–C397. Residues S106 and S143 each carry the phosphoserine modification. Residue S145 is modified to Phosphoserine; by FAM20C. Residues R187, T189, and W200 each contribute to the FAD site. Residues S252 and H255 each contribute to the FAD site. N280 is a glycosylation site (N-linked (GlcNAc...) asparagine). Residues R287 and R300 each coordinate FAD. N384 is a glycosylation site (N-linked (GlcNAc...) asparagine).

Belongs to the EROs family. Predominantly monomer. May function both as a monomer and a homodimer. Interacts with PDILT. Interacts with ERP44; the interaction results in retention of ERO1A in the endoplasmic reticulum. Requires FAD as cofactor. Post-translationally, N-glycosylated. In terms of processing, the Cys-94/Cys-99 and Cys-394/Cys-397 disulfide bonds constitute the redox-active center. The Cys-94/Cys-99 disulfide bond may accept electron from P4HB and funnel them to the active site disulfide Cys-394/Cys-397. The regulatory Cys-99/Cys-104 disulfide bond stabilizes the other regulatory bond Cys-94/Cys-131. Phosphorylated on Ser-145 by FAM20C in the Golgi which increases its enzymatic activity. Phosphorylation is induced by lactation. It is also induced by hypoxia and reductive stress. As to expression, widely expressed at low level. Expressed at high level in upper digestive tract. Highly expressed in esophagus. Weakly expressed in stomach and duodenum.

Its subcellular location is the endoplasmic reticulum membrane. It is found in the golgi apparatus lumen. The protein localises to the secreted. It localises to the cell projection. The protein resides in the dendrite. Its activity is regulated as follows. Enzyme activity is tightly regulated to prevent the accumulation of reactive oxygen species in the endoplasmic reticulum. Reversibly down-regulated by the formation of disulfide bonds between the active site Cys-94 and Cys-131, and between Cys-99 and Cys-104. Glutathione may be required to regulate its activity in the endoplasmic reticulum. Functionally, oxidoreductase involved in disulfide bond formation in the endoplasmic reticulum. Efficiently reoxidizes P4HB/PDI, the enzyme catalyzing protein disulfide formation, in order to allow P4HB to sustain additional rounds of disulfide formation. Following P4HB reoxidation, passes its electrons to molecular oxygen via FAD, leading to the production of reactive oxygen species (ROS) in the cell. Required for the proper folding of immunoglobulins. Plays an important role in ER stress-induced, CHOP-dependent apoptosis by activating the inositol 1,4,5-trisphosphate receptor IP3R1. Involved in the release of the unfolded cholera toxin from reduced P4HB/PDI in case of infection by V.cholerae, thereby playing a role in retrotranslocation of the toxin. This chain is ERO1-like protein alpha, found in Homo sapiens (Human).